A 146-amino-acid chain; its full sequence is uncharacterized protein (146 aa).

Residues 86–96 (EFDSPMDEEEE) are compositionally biased toward acidic residues. The disordered stretch occupies residues 86–124 (EFDSPMDEEEETKPREASLDQTAPKKSKKEELLVKNNNF).

This is an uncharacterized protein from Ostreid herpesvirus 1 (isolate France) (OsHV-1).